Consider the following 115-residue polypeptide: U3-lycotoxin-Ls1k (115 aa).

The first 20 residues, 1–20, serve as a signal peptide directing secretion; the sequence is MKFVLLFGVLLVTLFSYSSA. Residues 21 to 44 constitute a propeptide that is removed on maturation; it reads EMLDDFDQADEDELLSLIEKEEAR. Disulfide bonds link Cys48–Cys63, Cys55–Cys72, Cys62–Cys87, and Cys74–Cys85.

This sequence belongs to the neurotoxin 19 (CSTX) family. 01 subfamily. Expressed by the venom gland.

It localises to the secreted. The polypeptide is U3-lycotoxin-Ls1k (Lycosa singoriensis (Wolf spider)).